The following is a 615-amino-acid chain: 1-deoxy-D-xylulose-5-phosphate synthase (615 aa).

Residues His-72 and Gly-113–Ala-115 contribute to the thiamine diphosphate site. Asp-144 serves as a coordination point for Mg(2+). Residues Gly-145 to Ala-146, Asn-173, Tyr-281, and Glu-360 contribute to the thiamine diphosphate site. Residue Asn-173 participates in Mg(2+) binding.

Belongs to the transketolase family. DXPS subfamily. As to quaternary structure, homodimer. Requires Mg(2+) as cofactor. Thiamine diphosphate is required as a cofactor.

The catalysed reaction is D-glyceraldehyde 3-phosphate + pyruvate + H(+) = 1-deoxy-D-xylulose 5-phosphate + CO2. It functions in the pathway metabolic intermediate biosynthesis; 1-deoxy-D-xylulose 5-phosphate biosynthesis; 1-deoxy-D-xylulose 5-phosphate from D-glyceraldehyde 3-phosphate and pyruvate: step 1/1. Catalyzes the acyloin condensation reaction between C atoms 2 and 3 of pyruvate and glyceraldehyde 3-phosphate to yield 1-deoxy-D-xylulose-5-phosphate (DXP). This chain is 1-deoxy-D-xylulose-5-phosphate synthase, found in Thermus thermophilus (strain ATCC BAA-163 / DSM 7039 / HB27).